The following is a 388-amino-acid chain: Succinate--CoA ligase [ADP-forming] subunit beta (388 aa).

The 236-residue stretch at 9 to 244 folds into the ATP-grasp domain; it reads KEILRKFGVA…LDEEDPAEIE (236 aa). ATP is bound by residues lysine 46, 53–55, glutamate 99, alanine 102, and glutamate 107; that span reads GRG. Positions 199 and 213 each coordinate Mg(2+). Substrate contacts are provided by residues asparagine 264 and 321–323; that span reads GIM.

It belongs to the succinate/malate CoA ligase beta subunit family. Heterotetramer of two alpha and two beta subunits. It depends on Mg(2+) as a cofactor.

It catalyses the reaction succinate + ATP + CoA = succinyl-CoA + ADP + phosphate. The catalysed reaction is GTP + succinate + CoA = succinyl-CoA + GDP + phosphate. Its pathway is carbohydrate metabolism; tricarboxylic acid cycle; succinate from succinyl-CoA (ligase route): step 1/1. In terms of biological role, succinyl-CoA synthetase functions in the citric acid cycle (TCA), coupling the hydrolysis of succinyl-CoA to the synthesis of either ATP or GTP and thus represents the only step of substrate-level phosphorylation in the TCA. The beta subunit provides nucleotide specificity of the enzyme and binds the substrate succinate, while the binding sites for coenzyme A and phosphate are found in the alpha subunit. The polypeptide is Succinate--CoA ligase [ADP-forming] subunit beta (Burkholderia cenocepacia (strain ATCC BAA-245 / DSM 16553 / LMG 16656 / NCTC 13227 / J2315 / CF5610) (Burkholderia cepacia (strain J2315))).